Reading from the N-terminus, the 337-residue chain is Inner membrane protein YhjD (337 aa).

The span at 1–29 shows a compositional bias: basic and acidic residues; the sequence is MTQENEIKRPIQDLEHEPIKPLDNSEKGS. Residues 1 to 31 are disordered; that stretch reads MTQENEIKRPIQDLEHEPIKPLDNSEKGSKV. At 1–74 the chain is on the cytoplasmic side; that stretch reads MTQENEIKRP…LGNQFGAAIT (74 aa). Residues 75-97 form a helical membrane-spanning segment; sequence YFSFLSMIPILMVSFAAGGFVLA. The Periplasmic portion of the chain corresponds to 98–133; the sequence is SHPMLLQDIFDKILQNISDPTLAATLKNTINTAVQQ. A helical membrane pass occupies residues 134 to 156; the sequence is RTTVGLVGLAVALYSGINWMGNL. Topologically, residues 157–185 are cytoplasmic; that stretch reads REAIRAQSRDVWERSPQDQEKFWVKYLRD. The chain crosses the membrane as a helical span at residues 186 to 208; the sequence is FISLIGLLIALIVTLSITSVAGS. The Periplasmic portion of the chain corresponds to 209-227; that stretch reads AQQMIISALHLNSIEWLKP. The chain crosses the membrane as a helical span at residues 228 to 250; sequence TWRLIGLAISIFANYLLFFWIFW. The Cytoplasmic portion of the chain corresponds to 251–261; it reads RLPRHRPRKKA. Residues 262 to 284 traverse the membrane as a helical segment; the sequence is LIRGTFLAAIGFEVIKIVMTYTL. Over 285–298 the chain is Periplasmic; it reads PSLMKSPSGAAFGS. The chain crosses the membrane as a helical span at residues 299–321; sequence VLGLMAFFYFFARLTLFCAAWIA. At 322-337 the chain is on the cytoplasmic side; the sequence is TAEYKDDPRMPGKTQP.

It localises to the cell inner membrane. This chain is Inner membrane protein YhjD (yhjD), found in Escherichia coli (strain K12).